The primary structure comprises 109 residues: Large ribosomal subunit protein uL22 (109 aa).

It belongs to the universal ribosomal protein uL22 family. In terms of assembly, part of the 50S ribosomal subunit.

Its function is as follows. This protein binds specifically to 23S rRNA; its binding is stimulated by other ribosomal proteins, e.g. L4, L17, and L20. It is important during the early stages of 50S assembly. It makes multiple contacts with different domains of the 23S rRNA in the assembled 50S subunit and ribosome. Functionally, the globular domain of the protein is located near the polypeptide exit tunnel on the outside of the subunit, while an extended beta-hairpin is found that lines the wall of the exit tunnel in the center of the 70S ribosome. The protein is Large ribosomal subunit protein uL22 of Dehalococcoides mccartyi (strain ATCC BAA-2266 / KCTC 15142 / 195) (Dehalococcoides ethenogenes (strain 195)).